The following is a 463-amino-acid chain: Mitochondrial distribution and morphology protein 10 (463 aa).

Belongs to the MDM10 family. In terms of assembly, component of the ER-mitochondria encounter structure (ERMES) or MDM complex, composed of MMM1, MDM10, MDM12 and MDM34. Associates with the mitochondrial outer membrane sorting assembly machinery SAM(core) complex.

It is found in the mitochondrion outer membrane. Functionally, component of the ERMES/MDM complex, which serves as a molecular tether to connect the endoplasmic reticulum and mitochondria. Components of this complex are involved in the control of mitochondrial shape and protein biogenesis and may function in phospholipid exchange. MDM10 is involved in the late assembly steps of the general translocase of the mitochondrial outer membrane (TOM complex). Functions in the TOM40-specific route of the assembly of outer membrane beta-barrel proteins, including the association of TOM40 with the receptor TOM22 and small TOM proteins. Can associate with the SAM(core) complex as well as the MDM12-MMM1 complex, both involved in late steps of the major beta-barrel assembly pathway, that is responsible for biogenesis of all outer membrane beta-barrel proteins. May act as a switch that shuttles between both complexes and channels precursor proteins into the TOM40-specific pathway. Plays a role in mitochondrial morphology and in the inheritance of mitochondria. The polypeptide is Mitochondrial distribution and morphology protein 10 (Candida dubliniensis (strain CD36 / ATCC MYA-646 / CBS 7987 / NCPF 3949 / NRRL Y-17841) (Yeast)).